Here is a 602-residue protein sequence, read N- to C-terminus: Isocyanide synthase A (602 aa).

It belongs to the isocyanide synthase family.

Isocyanide synthase involved in the biosynthesis of isocyanides (or isonitriles), a class of microbial secondary metabolites. The presence of an isonitrile moiety within a compound imparts unique biological (cytotoxic, antibacterial, and antiprotozoal) and chemical (transition metal coordination) properties and enables synthetic and biochemical applications. The polypeptide is Isocyanide synthase A (Aspergillus fumigatus (strain ATCC MYA-4609 / CBS 101355 / FGSC A1100 / Af293) (Neosartorya fumigata)).